The following is a 481-amino-acid chain: Protein nucleotidyltransferase YdiU (481 aa).

The ATP site is built by G85, G87, R88, K108, D120, G121, R171, and R178. The active-site Proton acceptor is D248. The Mg(2+) site is built by N249 and D258. An ATP-binding site is contributed by D258. Residues 458–481 are disordered; it reads HPGLAEFQQPPTPEQKGLQLSCSS.

It belongs to the SELO family. Requires Mg(2+) as cofactor. The cofactor is Mn(2+).

The catalysed reaction is L-seryl-[protein] + ATP = 3-O-(5'-adenylyl)-L-seryl-[protein] + diphosphate. It carries out the reaction L-threonyl-[protein] + ATP = 3-O-(5'-adenylyl)-L-threonyl-[protein] + diphosphate. The enzyme catalyses L-tyrosyl-[protein] + ATP = O-(5'-adenylyl)-L-tyrosyl-[protein] + diphosphate. It catalyses the reaction L-histidyl-[protein] + UTP = N(tele)-(5'-uridylyl)-L-histidyl-[protein] + diphosphate. The catalysed reaction is L-seryl-[protein] + UTP = O-(5'-uridylyl)-L-seryl-[protein] + diphosphate. It carries out the reaction L-tyrosyl-[protein] + UTP = O-(5'-uridylyl)-L-tyrosyl-[protein] + diphosphate. In terms of biological role, nucleotidyltransferase involved in the post-translational modification of proteins. It can catalyze the addition of adenosine monophosphate (AMP) or uridine monophosphate (UMP) to a protein, resulting in modifications known as AMPylation and UMPylation. This Hydrogenovibrio crunogenus (strain DSM 25203 / XCL-2) (Thiomicrospira crunogena) protein is Protein nucleotidyltransferase YdiU.